A 520-amino-acid chain; its full sequence is Keratin, type II cytoskeletal 8 (520 aa).

A compositionally biased stretch (low complexity) spans 1 to 19 (MSTYSKKTSYTVKSSSSGS). The interval 1–20 (MSTYSKKTSYTVKSSSSGSI) is disordered. The interval 2 to 114 (STYSKKTSYT…DPNIQIVRTQ (113 aa)) is head. At serine 28 the chain carries Phosphoserine. A coil 1A region spans residues 115–150 (EKEQIKTLNNRFASFIDKVRFLEQQNKMLETKWSLL). Positions 115 to 426 (EKEQIKTLNN…KLLEGEEDRL (312 aa)) constitute an IF rod domain. The segment at 151 to 166 (QNQTATRSNIDAMFEA) is linker 1. Positions 168–259 (IANLRRQLDS…QIFEEEIREL (92 aa)) are coil 1B. A linker 12 region spans residues 260–283 (QSQIKDTSVVVEMDNSRNLDMDAI). The interval 284–422 (VAEVRAQYED…ATYRKLLEGE (139 aa)) is coil 2. Positions 423-520 (EDRLATGIKA…VSESSEVVQD (98 aa)) are tail.

Belongs to the intermediate filament family. Heterotetramer of two type I and two type II keratins. Keratin-8 associates with keratin-18. As to expression, expressed in simple epithelia.

The protein resides in the cytoplasm. Its subcellular location is the nucleus. The protein localises to the nucleoplasm. It localises to the nucleus matrix. Functionally, together with KRT19, helps to link the contractile apparatus to dystrophin at the costameres of striated muscle. The sequence is that of Keratin, type II cytoskeletal 8 from Danio rerio (Zebrafish).